A 640-amino-acid chain; its full sequence is 1,4-alpha-glucan branching enzyme GlgB (640 aa).

Catalysis depends on aspartate 318, which acts as the Nucleophile. The Proton donor role is filled by glutamate 371.

This sequence belongs to the glycosyl hydrolase 13 family. GlgB subfamily. As to quaternary structure, monomer.

It catalyses the reaction Transfers a segment of a (1-&gt;4)-alpha-D-glucan chain to a primary hydroxy group in a similar glucan chain.. The protein operates within glycan biosynthesis; glycogen biosynthesis. Functionally, catalyzes the formation of the alpha-1,6-glucosidic linkages in glycogen by scission of a 1,4-alpha-linked oligosaccharide from growing alpha-1,4-glucan chains and the subsequent attachment of the oligosaccharide to the alpha-1,6 position. This chain is 1,4-alpha-glucan branching enzyme GlgB, found in Francisella tularensis subsp. novicida (strain U112).